A 349-amino-acid chain; its full sequence is Guanine nucleotide-binding protein-like alpha-10 subunit (349 aa).

The G-alpha domain occupies 33 to 349; it reads EEIRVLIYGQ…LNITYNSVKN (317 aa). A G1 motif region spans residues 36 to 49; that stretch reads RVLIYGQKKVGVTT. The G2 motif stretch occupies residues 168–176; the sequence is DLNFIKLTQ. A G3 motif region spans residues 191–200; sequence IKMIEMGIQT. GTP is bound by residues 195-199 and 266-269; these read EMGIQ and NKKD. A G4 motif region spans residues 262–269; that stretch reads IVFFNKKD. The tract at residues 320–325 is G5 motif; that stretch reads NEESEV.

Belongs to the G-alpha family.

The protein is Guanine nucleotide-binding protein-like alpha-10 subunit (gpaJ) of Dictyostelium discoideum (Social amoeba).